A 981-amino-acid chain; its full sequence is Mediator of RNA polymerase II transcription subunit 5 (981 aa).

This sequence belongs to the Mediator complex subunit 5 family. As to quaternary structure, component of the Mediator complex.

The protein resides in the nucleus. Its function is as follows. Component of the Mediator complex, a coactivator involved in the regulated transcription of nearly all RNA polymerase II-dependent genes. Mediator functions as a bridge to convey information from gene-specific regulatory proteins to the basal RNA polymerase II transcription machinery. Mediator is recruited to promoters by direct interactions with regulatory proteins and serves as a scaffold for the assembly of a functional preinitiation complex with RNA polymerase II and the general transcription factors. This chain is Mediator of RNA polymerase II transcription subunit 5 (NUT1), found in Scheffersomyces stipitis (strain ATCC 58785 / CBS 6054 / NBRC 10063 / NRRL Y-11545) (Yeast).